The chain runs to 647 residues: DNA ligase (647 aa).

Residues 30–34 (DEEYD), 79–80 (SM), and E105 contribute to the NAD(+) site. K107 functions as the N6-AMP-lysine intermediate in the catalytic mechanism. NAD(+) contacts are provided by R128, E162, and K301. Positions 395, 398, 411, and 416 each coordinate Zn(2+). The BRCT domain occupies 570–647 (KSDSVIFGKT…ESAFNELVKE (78 aa)).

This sequence belongs to the NAD-dependent DNA ligase family. LigA subfamily. The cofactor is Mg(2+). Mn(2+) serves as cofactor.

It catalyses the reaction NAD(+) + (deoxyribonucleotide)n-3'-hydroxyl + 5'-phospho-(deoxyribonucleotide)m = (deoxyribonucleotide)n+m + AMP + beta-nicotinamide D-nucleotide.. Its function is as follows. DNA ligase that catalyzes the formation of phosphodiester linkages between 5'-phosphoryl and 3'-hydroxyl groups in double-stranded DNA using NAD as a coenzyme and as the energy source for the reaction. It is essential for DNA replication and repair of damaged DNA. The polypeptide is DNA ligase (Campylobacter jejuni subsp. doylei (strain ATCC BAA-1458 / RM4099 / 269.97)).